The sequence spans 352 residues: Peptide chain release factor 1 (352 aa).

Q233 carries the N5-methylglutamine modification. The tract at residues 288-309 is disordered; the sequence is NAKDRKEQVGSGDRSERIRTYN. The span at 289-306 shows a compositional bias: basic and acidic residues; the sequence is AKDRKEQVGSGDRSERIR.

The protein belongs to the prokaryotic/mitochondrial release factor family. Post-translationally, methylated by PrmC. Methylation increases the termination efficiency of RF1.

The protein resides in the cytoplasm. Functionally, peptide chain release factor 1 directs the termination of translation in response to the peptide chain termination codons UAG and UAA. This Helicobacter pylori (strain G27) protein is Peptide chain release factor 1.